Here is a 457-residue protein sequence, read N- to C-terminus: Putative F-box protein At3g58860 (457 aa).

The 49-residue stretch at 6–54 (MDLFSKLPDEVISHILSSLPTKEAASTSVLAKKWRYLFAFVPSLDFNDS) folds into the F-box domain.

The protein is Putative F-box protein At3g58860 of Arabidopsis thaliana (Mouse-ear cress).